The following is an 89-amino-acid chain: Small ribosomal subunit protein uS15 (89 aa).

It belongs to the universal ribosomal protein uS15 family. Part of the 30S ribosomal subunit. Forms a bridge to the 50S subunit in the 70S ribosome, contacting the 23S rRNA.

Its function is as follows. One of the primary rRNA binding proteins, it binds directly to 16S rRNA where it helps nucleate assembly of the platform of the 30S subunit by binding and bridging several RNA helices of the 16S rRNA. Forms an intersubunit bridge (bridge B4) with the 23S rRNA of the 50S subunit in the ribosome. The protein is Small ribosomal subunit protein uS15 of Rippkaea orientalis (strain PCC 8801 / RF-1) (Cyanothece sp. (strain PCC 8801)).